The sequence spans 37 residues: Large ribosomal subunit protein bL36 (37 aa).

Belongs to the bacterial ribosomal protein bL36 family.

This chain is Large ribosomal subunit protein bL36 (rpmJ), found in Mycoplasmoides gallisepticum (strain R(low / passage 15 / clone 2)) (Mycoplasma gallisepticum).